We begin with the raw amino-acid sequence, 191 residues long: Cyclin-dependent kinase inhibitor 1 (191 aa).

The tract at residues 62–81 is disordered; the sequence is LIHLEEEDKDGDTETSTYRR. The segment at 162 to 191 is required for inhibitory function and interaction with CDK kinase complexes; the sequence is QLKEKFKKKYNFDFEKEKPLEGRYEWVKLE.

It belongs to the CDI family. ICK/KRP subfamily. In terms of assembly, specifically interacts with CDKA-1, but not with CDKB1-1. Interacts with CYCD2-1 and CYCD3-1. In terms of processing, ubiquitinated independently by RKP and SCF (SKP1-CUL1-FBL5/SKP2B) protein ligase complex, leading to proteasomal degradation. As to expression, expressed at low levels in roots, stems, leaves and flowers.

The protein resides in the nucleus. It is found in the nucleoplasm. Its function is as follows. Binds and inhibits CYCD2-1/CDKA-1 kinase complex activity. Regulates cell division which is crucial for plant growth, development and morphogenesis. Functions in turning cells from a mitotic to an endoreplicating cell cycle mode. Acts cell- and non-cell-autonomously to regulate endoreduplication by allowing S phase progression, but blocking entry into mitosis. Keeps on the one hand the plant cell cycle locally controlled, and on the other hand provides a possibility of linking cell cycle control in single cells with the supracellular organization of a tissue or an organ. May target specifically CDKA-1. The sequence is that of Cyclin-dependent kinase inhibitor 1 (KRP1) from Arabidopsis thaliana (Mouse-ear cress).